The chain runs to 341 residues: Ribosomal RNA small subunit methyltransferase H (341 aa).

S-adenosyl-L-methionine contacts are provided by residues 47 to 49 (GGY), aspartate 64, phenylalanine 91, aspartate 109, and glutamine 116.

Belongs to the methyltransferase superfamily. RsmH family.

It is found in the cytoplasm. The catalysed reaction is cytidine(1402) in 16S rRNA + S-adenosyl-L-methionine = N(4)-methylcytidine(1402) in 16S rRNA + S-adenosyl-L-homocysteine + H(+). Specifically methylates the N4 position of cytidine in position 1402 (C1402) of 16S rRNA. The sequence is that of Ribosomal RNA small subunit methyltransferase H from Rhizobium leguminosarum bv. trifolii (strain WSM2304).